Consider the following 158-residue polypeptide: Glycine/sarcosine/betaine reductase complex component A1 (158 aa).

Residue selenocysteine 44 is part of the active site. Residue selenocysteine 44 is a non-standard amino acid, selenocysteine.

This sequence belongs to the GrdA family. As to quaternary structure, monomer. Component of the glycine, sarcosine and betaine reductase complexes, together with components B and C.

The enzyme catalyses acetyl phosphate + [thioredoxin]-disulfide + NH4(+) + H2O = [thioredoxin]-dithiol + glycine + phosphate + H(+). It catalyses the reaction acetyl phosphate + methylamine + [thioredoxin]-disulfide + H2O = sarcosine + [thioredoxin]-dithiol + phosphate + H(+). The catalysed reaction is acetyl phosphate + trimethylamine + [thioredoxin]-disulfide + H2O = glycine betaine + [thioredoxin]-dithiol + phosphate + H(+). Functionally, in the first step of glycine, betaine and sarcosine reductases, the substrate is bound to component PB via a Schiff base intermediate. Then the PB-activated substrate is nucleophilically attacked by the selenol anion of component PA to transform it to a carboxymethylated selenoether and the respective amine. By action of component PC, acetyl phosphate is formed, leaving component PA in its oxidized state. Finally component PA becomes reduced by the thioredoxin system to start a new catalytic cycle of reductive deamination. The sequence is that of Glycine/sarcosine/betaine reductase complex component A1 (grdA1) from Peptoclostridium acidaminophilum (Eubacterium acidaminophilum).